The chain runs to 600 residues: Glutamine--fructose-6-phosphate aminotransferase [isomerizing] (600 aa).

Cys2 acts as the Nucleophile; for GATase activity in catalysis. The Glutamine amidotransferase type-2 domain maps to 2-217; that stretch reads CGIVGYIGQL…DKEMVIVTDK (216 aa). 2 SIS domains span residues 283–422 and 452–590; these read ISNA…SRGK and IARE…VDKP. Catalysis depends on Lys595, which acts as the For Fru-6P isomerization activity.

In terms of assembly, homodimer.

It is found in the cytoplasm. It catalyses the reaction D-fructose 6-phosphate + L-glutamine = D-glucosamine 6-phosphate + L-glutamate. Functionally, catalyzes the first step in hexosamine metabolism, converting fructose-6P into glucosamine-6P using glutamine as a nitrogen source. The sequence is that of Glutamine--fructose-6-phosphate aminotransferase [isomerizing] from Bacillus licheniformis (strain ATCC 14580 / DSM 13 / JCM 2505 / CCUG 7422 / NBRC 12200 / NCIMB 9375 / NCTC 10341 / NRRL NRS-1264 / Gibson 46).